The following is a 420-amino-acid chain: MAARNAFYAQSGGVTAVINASACGVLETARQYPDRIGTVYAGRNGIVGALTEDLIDTGQESAEAIAALRHTPSGAFGSCRYKLKGLEENRAQYERLIEVFRAHDIGYFFYNGGGDSADTCLKVSQLSEKLGYPLQAVHIPKTVDNDLPITDCCPGFGSVAKYIAVSVREASFDVRSMAATSTCIFVLEVMGRHAGWIAAAGGLASDERHELALVILFPEQVFDPERFLRAVDEKVRSHGYCSVVVSEGIRGADGRFVAESGSRDVFGHARLGGVAPVIADLIKERLGYKYHWAVADYLQRAARHIASRTDVEQAYAVGKAGVEMALKGLSAVMPAIVRTSDSPYRWEITAASLAEVANVEKKMPLEFISADGFGITEACRRYLRPLIEGEDYPPYAGGLPDYVTLCNVAVPKKLAASFSV.

Residue Gly-13 coordinates diphosphate. Residues 142–144 (TVD), 190–192 (MGR), Glu-247, and 297–300 (YLQR) contribute to the substrate site. Residue Asp-144 is the Proton acceptor of the active site.

It belongs to the phosphofructokinase type A (PFKA) family. PPi-dependent PFK group II subfamily. Clade 'B2' sub-subfamily. In terms of assembly, homodimer. Mg(2+) serves as cofactor. The cofactor is Co(2+). It depends on Mn(2+) as a cofactor.

It localises to the cytoplasm. The enzyme catalyses beta-D-fructose 6-phosphate + diphosphate = beta-D-fructose 1,6-bisphosphate + phosphate + H(+). It participates in carbohydrate degradation; glycolysis; D-glyceraldehyde 3-phosphate and glycerone phosphate from D-glucose: step 3/4. Its activity is regulated as follows. Non-allosteric. Functionally, catalyzes the phosphorylation of D-fructose 6-phosphate, the first committing step of glycolysis. Uses inorganic phosphate (PPi) as phosphoryl donor instead of ATP like common ATP-dependent phosphofructokinases (ATP-PFKs), which renders the reaction reversible, and can thus function both in glycolysis and gluconeogenesis. Consistently, PPi-PFK can replace the enzymes of both the forward (ATP-PFK) and reverse (fructose-bisphosphatase (FBPase)) reactions. The protein is Pyrophosphate--fructose 6-phosphate 1-phosphotransferase of Methylococcus capsulatus (strain ATCC 33009 / NCIMB 11132 / Bath).